The following is a 1179-amino-acid chain: Dynein axonemal assembly factor 9 (1179 aa).

Interacts with ARL3.

Functionally, may act as an effector for ARL3. This Mus musculus (Mouse) protein is Dynein axonemal assembly factor 9.